The sequence spans 456 residues: Exodeoxyribonuclease 7 large subunit (456 aa).

It belongs to the XseA family. Heterooligomer composed of large and small subunits.

The protein resides in the cytoplasm. The enzyme catalyses Exonucleolytic cleavage in either 5'- to 3'- or 3'- to 5'-direction to yield nucleoside 5'-phosphates.. In terms of biological role, bidirectionally degrades single-stranded DNA into large acid-insoluble oligonucleotides, which are then degraded further into small acid-soluble oligonucleotides. The protein is Exodeoxyribonuclease 7 large subunit of Shigella dysenteriae serotype 1 (strain Sd197).